A 200-amino-acid polypeptide reads, in one-letter code: NAD(P)H dehydrogenase (quinone) (200 aa).

The 187-residue stretch at 4–190 (VLVLYYSTYG…DGARFQGRLV (187 aa)) folds into the Flavodoxin-like domain. Residues 10–15 (STYGHL) and 78–80 (TRF) each bind FMN. An NAD(+)-binding site is contributed by Y12. Position 98 (W98) interacts with substrate. FMN is bound by residues 113–119 (STATQHG) and H134.

This sequence belongs to the WrbA family. Requires FMN as cofactor.

The enzyme catalyses a quinone + NADH + H(+) = a quinol + NAD(+). It catalyses the reaction a quinone + NADPH + H(+) = a quinol + NADP(+). The sequence is that of NAD(P)H dehydrogenase (quinone) from Acidovorax ebreus (strain TPSY) (Diaphorobacter sp. (strain TPSY)).